The following is a 178-amino-acid chain: Large ribosomal subunit protein uL6 (178 aa).

The protein belongs to the universal ribosomal protein uL6 family. In terms of assembly, part of the 50S ribosomal subunit.

Functionally, this protein binds to the 23S rRNA, and is important in its secondary structure. It is located near the subunit interface in the base of the L7/L12 stalk, and near the tRNA binding site of the peptidyltransferase center. The chain is Large ribosomal subunit protein uL6 from Streptococcus gordonii (strain Challis / ATCC 35105 / BCRC 15272 / CH1 / DL1 / V288).